We begin with the raw amino-acid sequence, 780 residues long: Pendrin (780 aa).

The Cytoplasmic portion of the chain corresponds to 1 to 87; the sequence is MAAPGGRSEP…YRVKEWLLSD (87 aa). A helical membrane pass occupies residues 88-108; sequence VISGVSTGLVATLQGMAYALL. A109 is a topological domain (extracellular). The helical transmembrane segment at 110 to 130 threads the bilayer; that stretch reads AVPVGYGLYSAFFPILTYFIF. The Cytoplasmic segment spans residues 131–135; the sequence is GTSRH. The helical transmembrane segment at 136–156 threads the bilayer; that stretch reads ISVGPFPVVSLMVGSVVLSMA. Residues 157–191 are Extracellular-facing; the sequence is PDEHFLVSSSNGTVLNTTMIDTAARDTARVLIASA. A helical transmembrane segment spans residues 192 to 212; it reads LTLLVGIIQLIFGGLQIGFIV. Over 213-218 the chain is Cytoplasmic; it reads RYLADP. The chain crosses the membrane as a helical span at residues 219–239; that stretch reads LVGGFTTAAAFQVLVSQLKIV. At 240–263 the chain is on the extracellular side; it reads LNVSTKNYNGVLSIIYTLVEIFQN. A helical membrane pass occupies residues 264 to 284; it reads IGDTNLADFTAGLLTIVVCMA. The Cytoplasmic segment spans residues 285 to 295; it reads VKELNDRFRHK. A helical membrane pass occupies residues 296-316; it reads IPVPIPIEVIVTIIATAISYG. Topologically, residues 317–344 are extracellular; sequence ANLEKNYNAGIVKSIPRGFLPPELPPVS. Residues 345 to 365 form a helical membrane-spanning segment; the sequence is LFSEMLAASFSIAVVAYAIAV. Residues 366 to 384 lie on the Cytoplasmic side of the membrane; it reads SVGKVYATKYDYTIDGNQE. Residues 385–405 form a helical membrane-spanning segment; that stretch reads FIAFGISNIFSGFFSCFVATT. Over 406 to 421 the chain is Extracellular; the sequence is ALSRTAVQESTGGKTQ. A helical transmembrane segment spans residues 422–442; the sequence is VAGIISAAIVMIAILALGKLL. Topologically, residues 443 to 448 are cytoplasmic; the sequence is EPLQKS. Residues 449–469 form a helical membrane-spanning segment; the sequence is VLAAVVIANLKGMFMQLCDIP. At 470–486 the chain is on the extracellular side; the sequence is RLWRQNKIDAVIWVFTC. The chain crosses the membrane as a helical span at residues 487–507; sequence IVSIILGLDLGLLAGLIFGLL. Residues 508–780 are Cytoplasmic-facing; it reads TVVLRVQFPS…QDEAMRTLAS (273 aa). Residues 535-729 form the STAS domain; the sequence is NYKNIEEPQG…LTVHDAILYL (195 aa).

The protein belongs to the SLC26A/SulP transporter (TC 2.A.53) family. In terms of assembly, interacts with IQGAP1; this interaction enhances the chloride-bicarbonate exchange activity of SLC26A4. As to expression, highly expressed in the kidney (at protein level). High expression in adult thyroid, lower expression in adult and fetal kidney and fetal brain. Not expressed in other tissues.

The protein resides in the cell membrane. The protein localises to the apical cell membrane. The catalysed reaction is chloride(in) = chloride(out). The enzyme catalyses iodide(out) = iodide(in). It carries out the reaction hydrogencarbonate(in) + chloride(out) = hydrogencarbonate(out) + chloride(in). It catalyses the reaction iodide(in) + hydrogencarbonate(out) = iodide(out) + hydrogencarbonate(in). The catalysed reaction is iodide(in) + chloride(out) = iodide(out) + chloride(in). The enzyme catalyses formate(in) + chloride(out) = formate(out) + chloride(in). Functionally, sodium-independent transporter of chloride and iodide. Mediates electroneutral chloride-bicarbonate, chloride-iodide and chloride-formate exchange with 1:1 stoichiometry. Mediates electroneutral iodide-bicarbonate exchange. The chain is Pendrin (SLC26A4) from Homo sapiens (Human).